Here is a 1358-residue protein sequence, read N- to C-terminus: DNA-directed RNA polymerase subunit beta (1358 aa).

The protein belongs to the RNA polymerase beta chain family. The RNAP catalytic core consists of 2 alpha, 1 beta, 1 beta' and 1 omega subunit. When a sigma factor is associated with the core the holoenzyme is formed, which can initiate transcription.

It carries out the reaction RNA(n) + a ribonucleoside 5'-triphosphate = RNA(n+1) + diphosphate. Its function is as follows. DNA-dependent RNA polymerase catalyzes the transcription of DNA into RNA using the four ribonucleoside triphosphates as substrates. This Methylococcus capsulatus (strain ATCC 33009 / NCIMB 11132 / Bath) protein is DNA-directed RNA polymerase subunit beta.